The chain runs to 309 residues: Probable manganese-dependent inorganic pyrophosphatase (309 aa).

His-9, Asp-13, Asp-15, Asp-75, His-97, and Asp-149 together coordinate Mn(2+).

Belongs to the PPase class C family. Mn(2+) serves as cofactor.

Its subcellular location is the cytoplasm. The catalysed reaction is diphosphate + H2O = 2 phosphate + H(+). In Bacillus cereus (strain ATCC 10987 / NRS 248), this protein is Probable manganese-dependent inorganic pyrophosphatase.